The primary structure comprises 451 residues: MNTNEIMSTIKMIEEQKLDIRTITMGISLRDCCSFNGEESRKRIYDKITRYAQDLVRVGEEIERDYGIPIINKRISVTPISMIAESSDDKDYVEYAKTLDRAAKAVGVNLIGGFSALVHKGCTKGDKILLQSIPEALHTTDIVCSSVNVGSSKTGINMNAVKQMGHIIKDVANLSASTNGMECMKLVVFANAIEDNPFMAGAFHGVGEAECVINVGISGPGVVKASLEKVKGEPFDVVAETIKKTAFRITRAGQLVAREASKKLDVPFGIIDLSLAPTPAVGDSVARIIEEIGVEACGAPGTTAALALLNDAVKKGGIMAASHVGGLSGAFIPVSEDEGMIAAVKSGALNLEKLEAMTCVCSVGLDMIAVPGDTPAETISGIIADEAAIGVINNKTTAVRIIPAIGMGVGDSVEFGGLFGTAPVMPVSKFSSADFINRGGRIPSPIHSFKN.

This sequence belongs to the UPF0210 family. As to quaternary structure, homodimer.

The chain is UPF0210 protein CA_C0479 from Clostridium acetobutylicum (strain ATCC 824 / DSM 792 / JCM 1419 / IAM 19013 / LMG 5710 / NBRC 13948 / NRRL B-527 / VKM B-1787 / 2291 / W).